Consider the following 181-residue polypeptide: Protein GrpE (181 aa).

The span at 1–10 (MENTQENPAT) shows a compositional bias: polar residues. A disordered region spans residues 1–33 (MENTQENPATPSAEDIGSEKQAAQGAAPAAEAA). Over residues 21 to 33 (QAAQGAAPAAEAA) the composition is skewed to low complexity.

This sequence belongs to the GrpE family. As to quaternary structure, homodimer.

Its subcellular location is the cytoplasm. Functionally, participates actively in the response to hyperosmotic and heat shock by preventing the aggregation of stress-denatured proteins, in association with DnaK and GrpE. It is the nucleotide exchange factor for DnaK and may function as a thermosensor. Unfolded proteins bind initially to DnaJ; upon interaction with the DnaJ-bound protein, DnaK hydrolyzes its bound ATP, resulting in the formation of a stable complex. GrpE releases ADP from DnaK; ATP binding to DnaK triggers the release of the substrate protein, thus completing the reaction cycle. Several rounds of ATP-dependent interactions between DnaJ, DnaK and GrpE are required for fully efficient folding. The polypeptide is Protein GrpE (Burkholderia cenocepacia (strain ATCC BAA-245 / DSM 16553 / LMG 16656 / NCTC 13227 / J2315 / CF5610) (Burkholderia cepacia (strain J2315))).